The primary structure comprises 483 residues: Probable pectate lyase 12 (483 aa).

The N-terminal stretch at 1–24 is a signal peptide; the sequence is MMLQRSCIVLFFSLFLLVPQMVFS. 2 N-linked (GlcNAc...) asparagine glycosylation sites follow: Asn27 and Asn50. Ca(2+) contacts are provided by Asp220, Asp244, and Asp248. Residue Arg300 is part of the active site.

Belongs to the polysaccharide lyase 1 family. Requires Ca(2+) as cofactor.

The catalysed reaction is Eliminative cleavage of (1-&gt;4)-alpha-D-galacturonan to give oligosaccharides with 4-deoxy-alpha-D-galact-4-enuronosyl groups at their non-reducing ends.. It participates in glycan metabolism; pectin degradation; 2-dehydro-3-deoxy-D-gluconate from pectin: step 2/5. The sequence is that of Probable pectate lyase 12 from Arabidopsis thaliana (Mouse-ear cress).